We begin with the raw amino-acid sequence, 410 residues long: Segmentation protein fushi tarazu (410 aa).

Disordered regions lie at residues 71 to 93 (TQTVPPVQPTTPPPKATKRKAED), 138 to 157 (PAVSTKVTASPAPSYDQEYV), and 175 to 221 (SPQS…SAVS). Residues 76–85 (PVQPTTPPPK) show a composition bias toward pro residues. Over residues 190–199 (TPPPTTPTSL) the composition is skewed to pro residues. Positions 254–313 (SKRTRQTYTRYQTLELEKEFHFNRYITRRRRIDIANALSLSERQIKIWFQNRRMKSKKDR) form a DNA-binding region, homeobox.

Belongs to the Antp homeobox family. Phosphorylated at as many as 16 sites. In terms of tissue distribution, expressed early in development in a striped pattern at the blastoderm stage. Later expressed in a specific subset of neuronal precursor cells, neurons and glia in the developing CNS. Between 5 and 6 hours of development, found in the midline precursor-2 cells in a segmentally repeating pattern. Expression in many other neuronal precursors follows and reaches a second peak of abundance at 9 hours of development. Expressed in the hindgut between 11-15 hours of development.

The protein localises to the nucleus. May play a role in determining neuronal identity, may be directly involved in specifying identity of individual neurons. Required during embryogenesis for the process of body segmentation. Homeotic protein, required in alternating segment primordia, it specifies the correct number of segments. This Drosophila melanogaster (Fruit fly) protein is Segmentation protein fushi tarazu (ftz).